The primary structure comprises 617 residues: KIF-binding protein (617 aa).

Residues 48–83 (ALLGPAPEDDDERAADDGPVDQALGAGEPRDAEGPG) form a disordered region. At Ser174 the chain carries Phosphoserine.

This sequence belongs to the KIF-binding protein family. In terms of assembly, interacts with KIF1B; positively regulates KIF1B microtubule motor activity. Interacts with STMN2.

The protein resides in the cytoplasm. It is found in the cytoskeleton. Its function is as follows. Activator of KIF1B plus-end-directed microtubule motor activity. Required for organization of axonal microtubules, and axonal outgrowth and maintenance during peripheral and central nervous system development. This Rattus norvegicus (Rat) protein is KIF-binding protein (Kifbp).